A 258-amino-acid polypeptide reads, in one-letter code: 14-3-3 protein homolog (258 aa).

This sequence belongs to the 14-3-3 family.

In Encephalitozoon cuniculi (strain GB-M1) (Microsporidian parasite), this protein is 14-3-3 protein homolog.